Consider the following 673-residue polypeptide: DNA ligase (673 aa).

NAD(+)-binding positions include 32–36 (DHVYD), 81–82 (SL), and Glu111. Lys113 serves as the catalytic N6-AMP-lysine intermediate. The NAD(+) site is built by Arg134, Glu171, Lys286, and Lys310. Residues Cys404, Cys407, Cys422, and Cys428 each contribute to the Zn(2+) site. The region spanning 595–673 (NIIDEYKNKT…NEFWKKDNNF (79 aa)) is the BRCT domain.

It belongs to the NAD-dependent DNA ligase family. LigA subfamily. Requires Mg(2+) as cofactor. The cofactor is Mn(2+).

The catalysed reaction is NAD(+) + (deoxyribonucleotide)n-3'-hydroxyl + 5'-phospho-(deoxyribonucleotide)m = (deoxyribonucleotide)n+m + AMP + beta-nicotinamide D-nucleotide.. Functionally, DNA ligase that catalyzes the formation of phosphodiester linkages between 5'-phosphoryl and 3'-hydroxyl groups in double-stranded DNA using NAD as a coenzyme and as the energy source for the reaction. It is essential for DNA replication and repair of damaged DNA. The protein is DNA ligase of Ureaplasma parvum serovar 3 (strain ATCC 27815 / 27 / NCTC 11736).